Consider the following 143-residue polypeptide: Regulator of ribonuclease activity B (143 aa).

Residues Glu-113–His-143 are disordered. Over residues Pro-115–Asp-136 the composition is skewed to acidic residues.

This sequence belongs to the RraB family. In terms of assembly, interacts with the C-terminal region of Rne.

Its subcellular location is the cytoplasm. In terms of biological role, globally modulates RNA abundance by binding to RNase E (Rne) and regulating its endonucleolytic activity. Can modulate Rne action in a substrate-dependent manner by altering the composition of the degradosome. This chain is Regulator of ribonuclease activity B, found in Haemophilus ducreyi (strain 35000HP / ATCC 700724).